The sequence spans 423 residues: Gamma-glutamyl phosphate reductase (423 aa).

This sequence belongs to the gamma-glutamyl phosphate reductase family.

The protein localises to the cytoplasm. The catalysed reaction is L-glutamate 5-semialdehyde + phosphate + NADP(+) = L-glutamyl 5-phosphate + NADPH + H(+). It functions in the pathway amino-acid biosynthesis; L-proline biosynthesis; L-glutamate 5-semialdehyde from L-glutamate: step 2/2. Its function is as follows. Catalyzes the NADPH-dependent reduction of L-glutamate 5-phosphate into L-glutamate 5-semialdehyde and phosphate. The product spontaneously undergoes cyclization to form 1-pyrroline-5-carboxylate. This chain is Gamma-glutamyl phosphate reductase, found in Magnetococcus marinus (strain ATCC BAA-1437 / JCM 17883 / MC-1).